Consider the following 358-residue polypeptide: Dynein axonemal assembly factor 10 (358 aa).

WD repeat units lie at residues 64–106 (EKSK…SPVY), 116–155 (NAID…TPVV), 163–206 (ETKR…LRWE), 208–250 (NIRN…PSKG), 258–298 (AHKS…QRSK), and 320–358 (LSTQ…LNTV).

Interacts with PIH1D1; the interaction associates DNAAF10 with the R2TP complex. Interacts with several dynein axonemal assembly factors.

The protein resides in the dynein axonemal particle. Its function is as follows. Key assembly factor specifically required for the stability of axonemal dynein heavy chains in cytoplasm. The chain is Dynein axonemal assembly factor 10 (dnaaf10) from Danio rerio (Zebrafish).